A 142-amino-acid polypeptide reads, in one-letter code: Putative pre-16S rRNA nuclease (142 aa).

This sequence belongs to the YqgF nuclease family.

It is found in the cytoplasm. Functionally, could be a nuclease involved in processing of the 5'-end of pre-16S rRNA. The sequence is that of Putative pre-16S rRNA nuclease from Staphylococcus aureus (strain bovine RF122 / ET3-1).